The primary structure comprises 580 residues: Probable mediator of RNA polymerase II transcription subunit 26a (580 aa).

Residues 108–183 (DEVMRIRDIL…AEWKRLVDQW (76 aa)) enclose the TFIIS N-terminal domain. Basic and acidic residues-rich tracts occupy residues 244-255 (RHSVESKHERKS), 280-290 (QTRREEADVRP), and 299-309 (VEPKRQTKQSR). The disordered stretch occupies residues 244–337 (RHSVESKHER…RKLAGPQQDK (94 aa)). Positions 347–368 (FEFAKRKLQESYHQHENAKRQR) form a coiled coil.

It belongs to the Mediator complex subunit 26 family. As to quaternary structure, component of the Mediator complex.

Its subcellular location is the nucleus. Functionally, component of the Mediator complex, a coactivator involved in the regulated transcription of nearly all RNA polymerase II-dependent genes. Mediator functions as a bridge to convey information from gene-specific regulatory proteins to the basal RNA polymerase II transcription machinery. The Mediator complex, having a compact conformation in its free form, is recruited to promoters by direct interactions with regulatory proteins and serves for the assembly of a functional preinitiation complex with RNA polymerase II and the general transcription factors. May play a role in transcription elongation. The chain is Probable mediator of RNA polymerase II transcription subunit 26a (MED26A) from Arabidopsis thaliana (Mouse-ear cress).